The primary structure comprises 779 residues: 3-isopropylmalate dehydratase (779 aa).

[4Fe-4S] cluster-binding residues include Cys-360, Cys-421, and Cys-424. The disordered stretch occupies residues 484–518; it reads QDQSSPKVEVTSEDEKELESAAYDHAEPVQPEDAP. Ser-488 bears the Phosphoserine mark. Thr-494 bears the Phosphothreonine mark. At Ser-495 the chain carries Phosphoserine. The span at 501–510 shows a compositional bias: basic and acidic residues; it reads LESAAYDHAE.

Belongs to the aconitase/IPM isomerase family. Monomer. [4Fe-4S] cluster serves as cofactor.

It carries out the reaction (2R,3S)-3-isopropylmalate = (2S)-2-isopropylmalate. The protein operates within amino-acid biosynthesis; L-leucine biosynthesis; L-leucine from 3-methyl-2-oxobutanoate: step 2/4. Functionally, catalyzes the isomerization between 2-isopropylmalate and 3-isopropylmalate, via the formation of 2-isopropylmaleate. This Saccharomyces cerevisiae (strain ATCC 204508 / S288c) (Baker's yeast) protein is 3-isopropylmalate dehydratase (LEU1).